Consider the following 215-residue polypeptide: Adenylate kinase (215 aa).

An ATP-binding site is contributed by G10–T15. Residues S30–V59 are NMP. AMP-binding positions include T31, R36, G57–V59, G85–R88, and Q92. The tract at residues G122–D159 is LID. ATP-binding positions include R123 and T132–Y133. AMP-binding residues include R156 and R167. Q200 contributes to the ATP binding site.

The protein belongs to the adenylate kinase family. As to quaternary structure, monomer.

Its subcellular location is the cytoplasm. It carries out the reaction AMP + ATP = 2 ADP. It participates in purine metabolism; AMP biosynthesis via salvage pathway; AMP from ADP: step 1/1. Functionally, catalyzes the reversible transfer of the terminal phosphate group between ATP and AMP. Plays an important role in cellular energy homeostasis and in adenine nucleotide metabolism. The sequence is that of Adenylate kinase from Neisseria meningitidis serogroup B (strain ATCC BAA-335 / MC58).